The chain runs to 308 residues: Protein Bel-1 (308 aa).

A DNA-binding region spans residues S94–C203. The interval K200–A242 is disordered. Over residues R207–P217 the composition is skewed to basic and acidic residues. The Nuclear localization signal signature appears at P217–G226. The interval P228–L304 is transactivation domain. Residues T229–G238 are compositionally biased toward polar residues.

As to quaternary structure, homodimer or homomultimer. Forms complexes with the host nuclear factors NFIA, NFIB, NFIC or NFIX.

It is found in the host nucleus. Functionally, transcriptional transactivator that activates the viral internal promoter (IP), thereby enhancing its own expression. This transactivation is repressed by nuclear factor I. Also transactivates the long terminal repeat (LTR) promoter, thereby inducing structural gene expression, initiating the late phase of infection. It is therefore a key regulator of viral gene expression. It directly binds to and activates DNA target sites of viral promoters and those of distinct cellular genes. Required for viral replication. The polypeptide is Protein Bel-1 (bel1) (Simian foamy virus type 1 (SFVmac)).